We begin with the raw amino-acid sequence, 359 residues long: Protein-arginine kinase (359 aa).

Residues 25-257 (IVISSRVRLA…QQVIEQERML (233 aa)) enclose the Phosphagen kinase C-terminal domain. ATP contacts are provided by residues 28-32 (SSRVR), H93, R128, 179-183 (RASLM), and 210-215 (RGIYGE). The RDXXRA motif of the pArg binding pocket involved in allosteric regulation signature appears at 340–345 (RDAKRA).

The protein belongs to the ATP:guanido phosphotransferase family.

The enzyme catalyses L-arginyl-[protein] + ATP = N(omega)-phospho-L-arginyl-[protein] + ADP + H(+). With respect to regulation, appears to be allosterically activated by the binding of pArg-containing polypeptides to the pArg-binding pocket localized in the C-terminal domain of McsB. Catalyzes the specific phosphorylation of arginine residues in proteins. In Syntrophomonas wolfei subsp. wolfei (strain DSM 2245B / Goettingen), this protein is Protein-arginine kinase.